A 618-amino-acid polypeptide reads, in one-letter code: Dihydroxy-acid dehydratase (618 aa).

Asp-81 serves as a coordination point for Mg(2+). Residue Cys-122 participates in [2Fe-2S] cluster binding. The Mg(2+) site is built by Asp-123 and Lys-124. Lys-124 carries the N6-carboxylysine modification. Cys-195 is a binding site for [2Fe-2S] cluster. Glu-492 is a binding site for Mg(2+). Residue Ser-518 is the Proton acceptor of the active site.

It belongs to the IlvD/Edd family. In terms of assembly, homodimer. [2Fe-2S] cluster serves as cofactor. Requires Mg(2+) as cofactor.

The enzyme catalyses (2R)-2,3-dihydroxy-3-methylbutanoate = 3-methyl-2-oxobutanoate + H2O. It carries out the reaction (2R,3R)-2,3-dihydroxy-3-methylpentanoate = (S)-3-methyl-2-oxopentanoate + H2O. Its pathway is amino-acid biosynthesis; L-isoleucine biosynthesis; L-isoleucine from 2-oxobutanoate: step 3/4. It functions in the pathway amino-acid biosynthesis; L-valine biosynthesis; L-valine from pyruvate: step 3/4. Its function is as follows. Functions in the biosynthesis of branched-chain amino acids. Catalyzes the dehydration of (2R,3R)-2,3-dihydroxy-3-methylpentanoate (2,3-dihydroxy-3-methylvalerate) into 2-oxo-3-methylpentanoate (2-oxo-3-methylvalerate) and of (2R)-2,3-dihydroxy-3-methylbutanoate (2,3-dihydroxyisovalerate) into 2-oxo-3-methylbutanoate (2-oxoisovalerate), the penultimate precursor to L-isoleucine and L-valine, respectively. This Zymomonas mobilis subsp. mobilis (strain ATCC 31821 / ZM4 / CP4) protein is Dihydroxy-acid dehydratase.